Consider the following 33-residue polypeptide: Photosystem II reaction center protein Psb30 (33 aa).

The helical transmembrane segment at 5–25 (VIAQPIVLGLIVASGPLVIVS) threads the bilayer.

Belongs to the Psb30/Ycf12 family. In terms of assembly, PSII is composed of 1 copy each of membrane proteins PsbA, PsbB, PsbC, PsbD, PsbE, PsbF, PsbH, PsbI, PsbJ, PsbK, PsbL, PsbM, PsbT, PsbX, PsbY, PsbZ, Psb30/Ycf12, peripheral proteins of the oxygen-evolving complex and a large number of cofactors. It forms dimeric complexes.

Its subcellular location is the plastid membrane. Its function is as follows. A core subunit of photosystem II (PSII), probably helps stabilize the reaction center. This chain is Photosystem II reaction center protein Psb30, found in Aneura mirabilis (Parasitic liverwort).